A 25-amino-acid chain; its full sequence is Hemocyanin subunit 3 (25 aa).

It belongs to the tyrosinase family. Hemocyanin subfamily. In terms of tissue distribution, hemolymph.

The protein localises to the secreted. It localises to the extracellular space. Its function is as follows. Hemocyanins are copper-containing oxygen carriers occurring freely dissolved in the hemolymph of many mollusks and arthropods. This chain is Hemocyanin subunit 3, found in Maja squinado (Mediterranean spider crab).